The chain runs to 405 residues: Cytoplasmic polyadenylated homeobox-like protein (405 aa).

2 disordered regions span residues 1 to 33 (MNLDGTSGGFPAEEDHHNEERQTKNKRKTKHRH) and 340 to 363 (PWDLGKQWSSAQSQLQSQLPQNNG). The span at 13 to 23 (EEDHHNEERQT) shows a compositional bias: basic and acidic residues. Basic residues predominate over residues 24 to 33 (KNKRKTKHRH). The homeobox DNA-binding region spans 28–87 (KTKHRHKFSEELLQELKEIFGENCYPDYTTRKTLAIKFDCPVNVIDNWFQNKRARLPPAE). Over residues 346 to 360 (QWSSAQSQLQSQLPQ) the composition is skewed to low complexity.

The protein resides in the nucleus. In terms of biological role, transcription factor that acts as activator. In Homo sapiens (Human), this protein is Cytoplasmic polyadenylated homeobox-like protein.